The primary structure comprises 624 residues: MAFSSSCSSVKAVNSRWTSPSPSPSSRFAVLPAFLHRRYATSVKLTAISAALKTVEQTTLTEDNRFSTVGSDSDEYNPTLPKPRILVTEKLGEAGVNLLREFGDVDCSYDLSPEDLKKKVAESDALIVRSGTKVTREVFEAAKGRLKVVGRAGVGIDNVDLQAATEHGCLVVNAPTANTVAAAEHGIALLASMARNVAQADASIKAGKWERSKYVGVSLVGKTLAVMGFGKVGTEVARRAKGLGMTVISHDPYAPADRARALGVDLVSFDQAISTADFVSLHMPLTPATKKVFNDETFSKMKKGVRLINVARGGVIDEDALVRALDAGIVAQAALDVFCEEPPSKDSRLIQHENVTVTPHLGASTKEAQEGVAIEIAEAVAGALKGELSATAVNAPMVAPEVLSELTPYIVLAEKLGRLAVQLASGGKGVQSIRVVYRSARDRDDLDTRLLRAMITKGIIEPISDSYVNLVNADFIAKQKGLRISEERMVVDSSPEYPVDSIQVQILNVESNFAGAVSDAGDISIEGKVKYGVPHLTCVGSFGVDVSLEGNLILCRQVDQPGMIGQVGNILGEQNVNVNFMSVGRTVLRKQAIMAIGVDEEPDNKTLERIGGVSAIEEFVFLKL.

The N-terminal 49 residues, 1–49 (MAFSSSCSSVKAVNSRWTSPSPSPSSRFAVLPAFLHRRYATSVKLTAIS), are a transit peptide targeting the chloroplast. Position 71 is a phosphoserine (S71). NAD(+)-binding positions include 231-232 (KV), D251, 310-312 (VAR), and D336. Residue R312 is part of the active site. E341 is an active-site residue. H360 functions as the Proton donor in the catalytic mechanism. 360 to 363 (HLGA) contributes to the NAD(+) binding site. The 73-residue stretch at 552–624 (LILCRQVDQP…AIEEFVFLKL (73 aa)) folds into the ACT domain.

It belongs to the D-isomer specific 2-hydroxyacid dehydrogenase family. In terms of tissue distribution, ubiquitous, but highly expressed in roots and in dark-grown leaf tissues. Expressed in the vasculature, stigma, anther filaments and shoot apical meristem. Not detected in the root meristem or in embryo.

The protein resides in the plastid. Its subcellular location is the chloroplast. The enzyme catalyses (2R)-3-phosphoglycerate + NAD(+) = 3-phosphooxypyruvate + NADH + H(+). It participates in amino-acid biosynthesis; L-serine biosynthesis; L-serine from 3-phospho-D-glycerate: step 1/3. Inhibited by 90 uM 3-phosphonooxypyruvate, but not by Ser, Thr, Val, Gly Trp, O-acetyl-L-Ser and Cys. In terms of biological role, involved in the plastidial phosphorylated pathway of serine biosynthesis (PPSB). The chain is D-3-phosphoglycerate dehydrogenase 2, chloroplastic (PGDH2) from Arabidopsis thaliana (Mouse-ear cress).